Reading from the N-terminus, the 278-residue chain is MINSKTKLLGLIGHPVEHSLSPTMHNEAIKDKDLNYVYLAFDVESENLKDVVNGAKAIGWKGFNITIPHKIEIMKYLDKIDNDAKLIGAVNTVKIENNKAIGYNTDGIGARLSIEEIIGEVKDYNILVIGAGGSSRAVCCELAKNNNLTIINRTVEKAEIIANDLSNKLNNAVYYGGLNHNYNMANFDIIINTTSLGMYPNVDNKPPISMQNIKKDAVVMDLIYNPKETLFLKEAKEKGCATINGLGMLIYQGAKSFEIWTGVKPDINIMKNAIIDIL.

Shikimate contacts are provided by residues S19 to S21 and T66. The Proton acceptor role is filled by K70. Residues N91 and D106 each contribute to the shikimate site. Residues G130–S134, N152–K157, and L222 each bind NADP(+). Residue Y224 participates in shikimate binding. G245 is a binding site for NADP(+).

The protein belongs to the shikimate dehydrogenase family. In terms of assembly, homodimer.

It catalyses the reaction shikimate + NADP(+) = 3-dehydroshikimate + NADPH + H(+). It functions in the pathway metabolic intermediate biosynthesis; chorismate biosynthesis; chorismate from D-erythrose 4-phosphate and phosphoenolpyruvate: step 4/7. In terms of biological role, involved in the biosynthesis of the chorismate, which leads to the biosynthesis of aromatic amino acids. Catalyzes the reversible NADPH linked reduction of 3-dehydroshikimate (DHSA) to yield shikimate (SA). The protein is Shikimate dehydrogenase (NADP(+)) of Methanococcus aeolicus (strain ATCC BAA-1280 / DSM 17508 / OCM 812 / Nankai-3).